A 565-amino-acid polypeptide reads, in one-letter code: MRGAILATAAALAGTAMADVAHMRRHGHDSFHQRRSPLAEADATCGCTTEVVTVWGPPTLIPVASPTPSTVTSEAVTTLHSTSTTTVTVIASASTPAASPSPATDKVPLPTPAITNFPSTGVYTIPATTVTVFDTTTVCGATTTELPAGTHTYGGVTTVVETATTVVCPYATVEPSGTTVTSVIKTTTYVCPSAGTYTIAPTTTTVPTSTVIVYPTPAVITPGTYTQPEQTVTVTRTDYTYVCPFTGQDEPTSAPAAPSTTAVPATTTAAPETTTAAPDTTTAVPSTSSAAPSSSSTAPASTGAVSGQMGMTYTPYTKGGDCKDKSSVLSEVAALKSKGFTHVRVYSTDCNSLEYIGEAARTSGLQMIIGVFISSTGVSGAQDQVTAISKWAQWDLVSLIVVGNEAIQNGYCDASTLAGFISSAKSAFQAAGYTGKVTTTEPINVWQAHGSTLCGVCDIVGANIHPFFNADVSADQAGKFVAQEIKVLESICPGKDVLNLETGWPHAGNANGKAVPGTSEQAIAIKSIADEVGSKSVFFSYFDDLWKEPGQFGVERYWGCFDTFN.

The first 18 residues, 1–18 (MRGAILATAAALAGTAMA), serve as a signal peptide directing secretion. Positions 246 to 304 (TGQDEPTSAPAAPSTTAVPATTTAAPETTTAAPDTTTAVPSTSSAAPSSSSTAPASTGA) are disordered. Residues 251–304 (PTSAPAAPSTTAVPATTTAAPETTTAAPDTTTAVPSTSSAAPSSSSTAPASTGA) show a composition bias toward low complexity. Glu-405 functions as the Proton donor in the catalytic mechanism. Glu-501 acts as the Nucleophile in catalysis.

Belongs to the glycosyl hydrolase 17 family.

It is found in the secreted. Its subcellular location is the cell wall. It carries out the reaction Hydrolysis of terminal, non-reducing beta-D-glucosyl residues with release of beta-D-glucose.. The protein operates within glycan metabolism; cellulose degradation. Functionally, beta-glucosidases are one of a number of cellulolytic enzymes involved in the degradation of cellulosic biomass. Catalyzes the last step releasing glucose from the inhibitory cellobiose. This chain is Probable beta-glucosidase btgE (btgE), found in Aspergillus fumigatus (strain CBS 144.89 / FGSC A1163 / CEA10) (Neosartorya fumigata).